A 301-amino-acid polypeptide reads, in one-letter code: Phosphoribosylaminoimidazole-succinocarboxamide synthase (301 aa).

Belongs to the SAICAR synthetase family.

It catalyses the reaction 5-amino-1-(5-phospho-D-ribosyl)imidazole-4-carboxylate + L-aspartate + ATP = (2S)-2-[5-amino-1-(5-phospho-beta-D-ribosyl)imidazole-4-carboxamido]succinate + ADP + phosphate + 2 H(+). Its pathway is purine metabolism; IMP biosynthesis via de novo pathway; 5-amino-1-(5-phospho-D-ribosyl)imidazole-4-carboxamide from 5-amino-1-(5-phospho-D-ribosyl)imidazole-4-carboxylate: step 1/2. The protein is Phosphoribosylaminoimidazole-succinocarboxamide synthase of Syntrophobacter fumaroxidans (strain DSM 10017 / MPOB).